The primary structure comprises 692 residues: Elongation factor G (692 aa).

In terms of domain architecture, tr-type G spans 8-282 (EKTRNIGIMA…AVLDYLPAPT (275 aa)). GTP-binding positions include 17–24 (AHIDAGKT), 81–85 (DTPGH), and 135–138 (NKMD).

Belongs to the TRAFAC class translation factor GTPase superfamily. Classic translation factor GTPase family. EF-G/EF-2 subfamily.

It localises to the cytoplasm. In terms of biological role, catalyzes the GTP-dependent ribosomal translocation step during translation elongation. During this step, the ribosome changes from the pre-translocational (PRE) to the post-translocational (POST) state as the newly formed A-site-bound peptidyl-tRNA and P-site-bound deacylated tRNA move to the P and E sites, respectively. Catalyzes the coordinated movement of the two tRNA molecules, the mRNA and conformational changes in the ribosome. The sequence is that of Elongation factor G from Bacillus velezensis (strain DSM 23117 / BGSC 10A6 / LMG 26770 / FZB42) (Bacillus amyloliquefaciens subsp. plantarum).